The following is a 441-amino-acid chain: GTPase Der (441 aa).

EngA-type G domains are found at residues 3 to 167 (PLIA…PNKT) and 176 to 351 (TRIA…EQFA). GTP contacts are provided by residues 9 to 16 (GRPNVGKS), 56 to 60 (DTGGF), 119 to 122 (NKID), 182 to 189 (GRPNVGKS), 229 to 233 (DTAGI), and 294 to 297 (NKWD). The 85-residue stretch at 352-436 (KRISTSDLNR…PMRLLFKGRE (85 aa)) folds into the KH-like domain.

Belongs to the TRAFAC class TrmE-Era-EngA-EngB-Septin-like GTPase superfamily. EngA (Der) GTPase family. As to quaternary structure, associates with the 50S ribosomal subunit.

Functionally, GTPase that plays an essential role in the late steps of ribosome biogenesis. The polypeptide is GTPase Der (Geotalea daltonii (strain DSM 22248 / JCM 15807 / FRC-32) (Geobacter daltonii)).